We begin with the raw amino-acid sequence, 296 residues long: MYQSLLKSLNRLNPRAWDFIQLTRMDKPIGIYLLLWPTLWALWIAGKGSPSLANIVIFVLGVVLTRAGGCVINDWADRKVDGHVKRTAQRPIAAGKISSKEALVFFALLMGVSFLLVLCTNAATIWLSLGGLALAFTYPFMKRYTYYPQVVLGAAFSWGMPMAFTAETGELPATAWLLWIANLLWTVGYDTYYAMTDRDDDLKIGVKSTAILFGDADRVIILTLQVLSLGCLVLAGSKFELGMWFHLGLLVAAGCYAWEFWYTRDRDRMRCFRAFLHNHWAGLAIFVGIVLDYALR.

The next 8 helical transmembrane spans lie at 28–48 (PIGI…AGKG), 52–72 (LANI…GCVI), 102–122 (ALVF…CTNA), 146–166 (YYPQ…AFTA), 169–189 (GELP…TVGY), 219–239 (VIIL…GSKF), 241–261 (LGMW…WEFW), and 275–295 (FLHN…DYAL).

The protein belongs to the UbiA prenyltransferase family. Mg(2+) serves as cofactor.

The protein resides in the cell inner membrane. The enzyme catalyses all-trans-octaprenyl diphosphate + 4-hydroxybenzoate = 4-hydroxy-3-(all-trans-octaprenyl)benzoate + diphosphate. It participates in cofactor biosynthesis; ubiquinone biosynthesis. Its function is as follows. Catalyzes the prenylation of para-hydroxybenzoate (PHB) with an all-trans polyprenyl group. Mediates the second step in the final reaction sequence of ubiquinone-8 (UQ-8) biosynthesis, which is the condensation of the polyisoprenoid side chain with PHB, generating the first membrane-bound Q intermediate 3-octaprenyl-4-hydroxybenzoate. This Pseudomonas fluorescens (strain Pf0-1) protein is 4-hydroxybenzoate octaprenyltransferase.